Consider the following 440-residue polypeptide: Thymidine phosphorylase (440 aa).

It belongs to the thymidine/pyrimidine-nucleoside phosphorylase family. As to quaternary structure, homodimer.

It catalyses the reaction thymidine + phosphate = 2-deoxy-alpha-D-ribose 1-phosphate + thymine. Its pathway is pyrimidine metabolism; dTMP biosynthesis via salvage pathway; dTMP from thymine: step 1/2. Its function is as follows. The enzymes which catalyze the reversible phosphorolysis of pyrimidine nucleosides are involved in the degradation of these compounds and in their utilization as carbon and energy sources, or in the rescue of pyrimidine bases for nucleotide synthesis. This chain is Thymidine phosphorylase, found in Enterobacter sp. (strain 638).